The following is a 417-amino-acid chain: Glutamyl-tRNA reductase (417 aa).

Substrate is bound by residues 49 to 52 (TCNR), serine 105, 110 to 112 (EPQ), and glutamine 116. Cysteine 50 (nucleophile) is an active-site residue. NADP(+) is bound at residue 185–190 (GAGEMI).

It belongs to the glutamyl-tRNA reductase family. In terms of assembly, homodimer.

It carries out the reaction (S)-4-amino-5-oxopentanoate + tRNA(Glu) + NADP(+) = L-glutamyl-tRNA(Glu) + NADPH + H(+). It participates in porphyrin-containing compound metabolism; protoporphyrin-IX biosynthesis; 5-aminolevulinate from L-glutamyl-tRNA(Glu): step 1/2. Catalyzes the NADPH-dependent reduction of glutamyl-tRNA(Glu) to glutamate 1-semialdehyde (GSA). This Azoarcus sp. (strain BH72) protein is Glutamyl-tRNA reductase.